The primary structure comprises 358 residues: Phospho-N-acetylmuramoyl-pentapeptide-transferase (358 aa).

Helical transmembrane passes span 21 to 41, 71 to 91, 95 to 115, 133 to 153, 166 to 186, 197 to 217, 234 to 254, 261 to 281, 286 to 306, and 337 to 357; these read YLTL…FVVG, TMGG…WADL, YIWV…VDDY, FWQS…ASVA, VAVN…VGSS, GLAV…AYAA, AGEL…FLWF, VFMG…LAVL, LVLF…MLQV, and IVRF…TLKI.

This sequence belongs to the glycosyltransferase 4 family. MraY subfamily. Mg(2+) is required as a cofactor.

The protein resides in the cell inner membrane. It carries out the reaction UDP-N-acetyl-alpha-D-muramoyl-L-alanyl-gamma-D-glutamyl-meso-2,6-diaminopimeloyl-D-alanyl-D-alanine + di-trans,octa-cis-undecaprenyl phosphate = di-trans,octa-cis-undecaprenyl diphospho-N-acetyl-alpha-D-muramoyl-L-alanyl-D-glutamyl-meso-2,6-diaminopimeloyl-D-alanyl-D-alanine + UMP. The protein operates within cell wall biogenesis; peptidoglycan biosynthesis. In terms of biological role, catalyzes the initial step of the lipid cycle reactions in the biosynthesis of the cell wall peptidoglycan: transfers peptidoglycan precursor phospho-MurNAc-pentapeptide from UDP-MurNAc-pentapeptide onto the lipid carrier undecaprenyl phosphate, yielding undecaprenyl-pyrophosphoryl-MurNAc-pentapeptide, known as lipid I. This chain is Phospho-N-acetylmuramoyl-pentapeptide-transferase, found in Nitrosococcus oceani (strain ATCC 19707 / BCRC 17464 / JCM 30415 / NCIMB 11848 / C-107).